A 313-amino-acid chain; its full sequence is Protein-methionine-sulfoxide reductase catalytic subunit MsrP (313 aa).

The segment at residues 1–44 is a signal peptide (tat-type signal); it reads MARWRPDTAEREATPEALYLRRREFLALGAAGAVGLLLPRGARA. Mo-molybdopterin contacts are provided by residues Asn76, 79-80, Cys134, Thr169, Asn217, Arg222, and 233-235; these read YE and GAK.

Belongs to the MsrP family. In terms of assembly, heterodimer of a catalytic subunit (MsrP) and a heme-binding subunit (MsrQ). Mo-molybdopterin is required as a cofactor. Post-translationally, predicted to be exported by the Tat system. The position of the signal peptide cleavage has not been experimentally proven.

The protein localises to the periplasm. It carries out the reaction L-methionyl-[protein] + a quinone + H2O = L-methionyl-(S)-S-oxide-[protein] + a quinol. The catalysed reaction is L-methionyl-[protein] + a quinone + H2O = L-methionyl-(R)-S-oxide-[protein] + a quinol. Its function is as follows. Part of the MsrPQ system that repairs oxidized periplasmic proteins containing methionine sulfoxide residues (Met-O), using respiratory chain electrons. Thus protects these proteins from oxidative-stress damage caused by reactive species of oxygen and chlorine generated by the host defense mechanisms. MsrPQ is essential for the maintenance of envelope integrity under bleach stress, rescuing a wide series of structurally unrelated periplasmic proteins from methionine oxidation. The catalytic subunit MsrP is non-stereospecific, being able to reduce both (R-) and (S-) diastereoisomers of methionine sulfoxide. The polypeptide is Protein-methionine-sulfoxide reductase catalytic subunit MsrP (Anaeromyxobacter dehalogenans (strain 2CP-C)).